The following is a 102-amino-acid chain: Citrate lyase acyl carrier protein (102 aa).

Ser14 bears the O-(phosphoribosyl dephospho-coenzyme A)serine mark.

This sequence belongs to the CitD family. As to quaternary structure, oligomer with a subunit composition of (alpha,beta,gamma)6.

It is found in the cytoplasm. In terms of biological role, covalent carrier of the coenzyme of citrate lyase. This Streptococcus mutans serotype c (strain ATCC 700610 / UA159) protein is Citrate lyase acyl carrier protein.